Here is a 608-residue protein sequence, read N- to C-terminus: Albumin (608 aa).

An N-terminal signal peptide occupies residues 1–18; sequence MKWVTFLLLLFVSDSAFS. Residues 19–24 constitute a propeptide that is removed on maturation; it reads RGLFRR. Albumin domains follow at residues 19–211, 212–403, and 404–601; these read RGLF…ALKE, KALA…EFQP, and LVEE…KLVA. His27 contacts Cu cation. Position 29 is a phosphoserine (Ser29). The Ca(2+) site is built by Glu30 and Asp37. Cys77 and Cys86 are joined by a disulfide. Ser82 and Ser89 each carry phosphoserine. A Zn(2+)-binding site is contributed by His91. 6 disulfide bridges follow: Cys99–Cys115, Cys114–Cys125, Cys148–Cys193, Cys192–Cys201, Cys224–Cys270, and Cys269–Cys277. A Ca(2+)-binding site is contributed by Glu268. 2 residues coordinate Zn(2+): His271 and Asp273. Ca(2+) contacts are provided by Asp273, Glu276, and Asp279. 8 cysteine pairs are disulfide-bonded: Cys289–Cys303, Cys302–Cys313, Cys340–Cys385, Cys384–Cys393, Cys416–Cys462, Cys461–Cys472, Cys485–Cys501, and Cys500–Cys511. Phosphoserine is present on Ser297. Phosphoserine is present on Ser443. 2 positions are modified to phosphothreonine: Thr444 and Thr446. The residue at position 460 (Lys460) is an N6-succinyllysine. Ser513 is subject to Phosphoserine. 2 cysteine pairs are disulfide-bonded: Cys538–Cys583 and Cys582–Cys591. N6-succinyllysine is present on Lys543. Position 558 is an N6-methyllysine (Lys558). Phosphothreonine is present on Thr570. The residue at position 588 (Lys588) is an N6-succinyllysine.

Belongs to the ALB/AFP/VDB family. As to quaternary structure, interacts with FCGRT; this interaction regulates ALB homeostasis. Interacts with TASOR. In plasma, occurs in a covalently-linked complex with chromophore-bound alpha-1-microglobulin; this interaction does not prevent fatty acid binding to ALB. As to expression, plasma.

It is found in the secreted. In terms of biological role, binds water, Ca(2+), Na(+), K(+), fatty acids, hormones, bilirubin and drugs. Its main function is the regulation of the colloidal osmotic pressure of blood. Major zinc transporter in plasma, typically binds about 80% of all plasma zinc. Major calcium and magnesium transporter in plasma, binds approximately 45% of circulating calcium and magnesium in plasma. Potentially has more than two calcium-binding sites and might additionally bind calcium in a non-specific manner. The shared binding site between zinc and calcium at residue Asp-273 suggests a crosstalk between zinc and calcium transport in the blood. The rank order of affinity is zinc &gt; calcium &gt; magnesium. Binds to the bacterial siderophore enterobactin and inhibits enterobactin-mediated iron uptake of E.coli from ferric transferrin, and may thereby limit the utilization of iron and growth of enteric bacteria such as E.coli. Does not prevent iron uptake by the bacterial siderophore aerobactin. The sequence is that of Albumin from Mesocricetus auratus (Golden hamster).